The following is a 194-amino-acid chain: MSEQSTSANPQRRTFLMVLPLIAFIGLALLFWFRLGSGDPSRIPSALIGRPAPQTALPPLEGLQADNVQVPGLDPAAFKGKVSLVNVWASWCVPCHDEAPLLTELGKDKRFQLVGINYKDAADNARRFLGRYGNPFGRVGVDANGRASIEWGVYGVPETFVVGREGTIVYKLVGPITPDNLRSVLLPQMEKALK.

An N-terminal signal peptide occupies residues 1 to 37 (MSEQSTSANPQRRTFLMVLPLIAFIGLALLFWFRLGS). The 145-residue stretch at 46–190 (ALIGRPAPQT…LRSVLLPQME (145 aa)) folds into the Thioredoxin domain. Cys92 and Cys95 form a disulfide bridge.

It belongs to the thioredoxin family. DsbE subfamily.

The protein localises to the periplasm. Required for disulfide bond formation in some periplasmic proteins. Also acts as a disulfide oxidoreductase in cytochromes c biogenesis. The cysteines of apocytochromes c must be in the reduced state for covalent linkage between the two moieties to occur. The chain is Thiol:disulfide interchange protein CycY (cycY) from Bradyrhizobium diazoefficiens (strain JCM 10833 / BCRC 13528 / IAM 13628 / NBRC 14792 / USDA 110).